Here is a 255-residue protein sequence, read N- to C-terminus: MLARRLIPCLDVRDGRVVKGVRFRDHEDVGDIVDLARRYAREGADELVFYDIAASARGRTVEPEWVSAVARELDIPFCVAGGIRSVDDARARLFAGADKISVNTPALEDPTIIDRLAAEFGSQCVVLGVDSRMIEGAWRVHQYTGDPDKSFAGHRRTLDWIGEGVDRGAGEVVLNCMDQDGVRDGYDIAQLEAARAMCSTPLIASGGAGRKEHFKSVFELAKVDGALAASVFHKGVIEIGQLKSWLDGEGIRVRP.

Residues Asp11 and Asp130 contribute to the active site.

This sequence belongs to the HisA/HisF family. Heterodimer of HisH and HisF.

The protein localises to the cytoplasm. It carries out the reaction 5-[(5-phospho-1-deoxy-D-ribulos-1-ylimino)methylamino]-1-(5-phospho-beta-D-ribosyl)imidazole-4-carboxamide + L-glutamine = D-erythro-1-(imidazol-4-yl)glycerol 3-phosphate + 5-amino-1-(5-phospho-beta-D-ribosyl)imidazole-4-carboxamide + L-glutamate + H(+). It functions in the pathway amino-acid biosynthesis; L-histidine biosynthesis; L-histidine from 5-phospho-alpha-D-ribose 1-diphosphate: step 5/9. IGPS catalyzes the conversion of PRFAR and glutamine to IGP, AICAR and glutamate. The HisF subunit catalyzes the cyclization activity that produces IGP and AICAR from PRFAR using the ammonia provided by the HisH subunit. The sequence is that of Imidazole glycerol phosphate synthase subunit HisF from Maricaulis maris (strain MCS10) (Caulobacter maris).